The chain runs to 702 residues: Ribosomal RNA large subunit methyltransferase K/L (702 aa).

Residues 43–154 (LVYQSLMWSR…KETASIALDL (112 aa)) enclose the THUMP domain.

It belongs to the methyltransferase superfamily. RlmKL family.

It localises to the cytoplasm. The enzyme catalyses guanosine(2445) in 23S rRNA + S-adenosyl-L-methionine = N(2)-methylguanosine(2445) in 23S rRNA + S-adenosyl-L-homocysteine + H(+). It carries out the reaction guanosine(2069) in 23S rRNA + S-adenosyl-L-methionine = N(2)-methylguanosine(2069) in 23S rRNA + S-adenosyl-L-homocysteine + H(+). Its function is as follows. Specifically methylates the guanine in position 2445 (m2G2445) and the guanine in position 2069 (m7G2069) of 23S rRNA. The polypeptide is Ribosomal RNA large subunit methyltransferase K/L (Escherichia coli O157:H7).